The following is a 265-amino-acid chain: Type III pantothenate kinase (265 aa).

6–13 (DVGNTHTV) contributes to the ATP binding site. 112–115 (GADR) provides a ligand contact to substrate. Asp114 (proton acceptor) is an active-site residue. Asp134 serves as a coordination point for K(+). Thr137 lines the ATP pocket. Position 189 (Thr189) interacts with substrate.

The protein belongs to the type III pantothenate kinase family. In terms of assembly, homodimer. Requires NH4(+) as cofactor. It depends on K(+) as a cofactor.

It localises to the cytoplasm. It carries out the reaction (R)-pantothenate + ATP = (R)-4'-phosphopantothenate + ADP + H(+). It functions in the pathway cofactor biosynthesis; coenzyme A biosynthesis; CoA from (R)-pantothenate: step 1/5. Functionally, catalyzes the phosphorylation of pantothenate (Pan), the first step in CoA biosynthesis. The polypeptide is Type III pantothenate kinase (Streptomyces griseus subsp. griseus (strain JCM 4626 / CBS 651.72 / NBRC 13350 / KCC S-0626 / ISP 5235)).